Consider the following 156-residue polypeptide: Ribosomal RNA large subunit methyltransferase H (156 aa).

S-adenosyl-L-methionine-binding positions include leucine 73, glycine 104, and leucine 123–leucine 128.

This sequence belongs to the RNA methyltransferase RlmH family. In terms of assembly, homodimer.

The protein localises to the cytoplasm. It catalyses the reaction pseudouridine(1915) in 23S rRNA + S-adenosyl-L-methionine = N(3)-methylpseudouridine(1915) in 23S rRNA + S-adenosyl-L-homocysteine + H(+). Specifically methylates the pseudouridine at position 1915 (m3Psi1915) in 23S rRNA. This chain is Ribosomal RNA large subunit methyltransferase H, found in Bordetella bronchiseptica (strain ATCC BAA-588 / NCTC 13252 / RB50) (Alcaligenes bronchisepticus).